The primary structure comprises 275 residues: AA9 family lytic polysaccharide monooxygenase D (275 aa).

Residues 1–17 form the signal peptide; the sequence is MKLSLLAIAAIAPFVSA. Residues H18 and H101 each contribute to the Cu(2+) site. A disulfide bridge links C67 with C189. An O2-binding site is contributed by H176. Position 186 (Y186) interacts with Cu(2+). The N-linked (GlcNAc...) asparagine glycan is linked to N220.

Belongs to the polysaccharide monooxygenase AA9 family. Requires Cu(2+) as cofactor.

The protein localises to the secreted. It catalyses the reaction [(1-&gt;4)-beta-D-glucosyl]n+m + reduced acceptor + O2 = 4-dehydro-beta-D-glucosyl-[(1-&gt;4)-beta-D-glucosyl]n-1 + [(1-&gt;4)-beta-D-glucosyl]m + acceptor + H2O.. Lytic polysaccharide monooxygenase (LPMO) that depolymerizes crystalline and amorphous polysaccharides via the oxidation of scissile alpha- or beta-(1-4)-glycosidic bonds, yielding C1 or C4 oxidation products. Catalysis by LPMOs requires the reduction of the active-site copper from Cu(II) to Cu(I) by a reducing agent and H(2)O(2) or O(2) as a cosubstrate. In Aspergillus tamarii, this protein is AA9 family lytic polysaccharide monooxygenase D.